Reading from the N-terminus, the 136-residue chain is ATP synthase epsilon chain, chloroplastic (136 aa).

This sequence belongs to the ATPase epsilon chain family. F-type ATPases have 2 components, CF(1) - the catalytic core - and CF(0) - the membrane proton channel. CF(1) has five subunits: alpha(3), beta(3), gamma(1), delta(1), epsilon(1). CF(0) has three main subunits: a, b and c.

The protein localises to the plastid. The protein resides in the chloroplast thylakoid membrane. Its function is as follows. Produces ATP from ADP in the presence of a proton gradient across the membrane. The sequence is that of ATP synthase epsilon chain, chloroplastic from Tetradesmus obliquus (Green alga).